A 378-amino-acid chain; its full sequence is Metalloendoproteinase 2-MMP (378 aa).

An N-terminal signal peptide occupies residues 1 to 20 (MRFCVFGFLSLFLIVSPASA). Residues 21 to 154 (WFFPNSTAVP…SRTHLHAVKR (134 aa)) constitute a propeptide, activation peptide. N25, N35, N46, N79, and N102 each carry an N-linked (GlcNAc...) asparagine glycan. A Cysteine switch motif is present at residues 118–125 (PRCGNPDV). C120 lines the Zn(2+) pocket. N-linked (GlcNAc...) asparagine glycans are attached at residues N127, N143, and N203. A Zn(2+)-binding site is contributed by H280. The active site involves E281. Residues H284 and H290 each contribute to the Zn(2+) site. A glycan (N-linked (GlcNAc...) asparagine) is linked at N330. S349 carries GPI-anchor amidated serine lipidation. Residues 350 to 378 (AAWRIDGSSRSTIVSLLLSTVGLVLWFLP) constitute a propeptide, removed in mature form.

It belongs to the peptidase M10A family. Matrix metalloproteinases (MMPs) subfamily. Zn(2+) serves as cofactor. As to expression, mostly expressed in roots, and, to a lower extent, in flowers, leaves and stems.

It is found in the cell membrane. With respect to regulation, repressed by acetohydroxamic acid (AHA). Functionally, matrix metalloproteinases (MMPs) or matrixins may play a role in the degradation and remodeling of the extracellular matrix (ECM) during development or in response to stresses. Required for plant growth, morphogenesis, and development with particular relevance for flowering and senescence. Active on McaPLGLDpaAR-NH(2) (QF24) and myelin basic protein (MBP) and, to some extent, on beta-casein. This chain is Metalloendoproteinase 2-MMP, found in Arabidopsis thaliana (Mouse-ear cress).